Reading from the N-terminus, the 74-residue chain is Anionic peptide clone 8 (74 aa).

The N-terminal stretch at 1–24 is a signal peptide; the sequence is MVSKSLIVLLLVSVLVSTFFTTEA.

It belongs to the non-disulfide-bridged peptide (NDBP) superfamily. Long chain multifunctional peptide (group 2) family. In terms of tissue distribution, expressed by the venom gland.

The protein localises to the secreted. In terms of biological role, may be an antimicrobial peptide. This chain is Anionic peptide clone 8, found in Tityus costatus (Brazilian scorpion).